Here is a 337-residue protein sequence, read N- to C-terminus: tRNA N6-adenosine threonylcarbamoyltransferase (337 aa).

Residues H111 and H115 each contribute to the Fe cation site. Residues 134 to 138, D167, G180, and N272 each bind substrate; that span reads LVSGG. D300 provides a ligand contact to Fe cation.

It belongs to the KAE1 / TsaD family. Fe(2+) serves as cofactor.

It localises to the cytoplasm. The enzyme catalyses L-threonylcarbamoyladenylate + adenosine(37) in tRNA = N(6)-L-threonylcarbamoyladenosine(37) in tRNA + AMP + H(+). Functionally, required for the formation of a threonylcarbamoyl group on adenosine at position 37 (t(6)A37) in tRNAs that read codons beginning with adenine. Is involved in the transfer of the threonylcarbamoyl moiety of threonylcarbamoyl-AMP (TC-AMP) to the N6 group of A37, together with TsaE and TsaB. TsaD likely plays a direct catalytic role in this reaction. In Escherichia coli O157:H7, this protein is tRNA N6-adenosine threonylcarbamoyltransferase.